The chain runs to 341 residues: L-threonine 3-dehydrogenase (341 aa).

Cysteine 38 is a Zn(2+) binding site. Active-site charge relay system residues include threonine 40 and histidine 43. Residues histidine 63, glutamate 64, cysteine 93, cysteine 96, cysteine 99, and cysteine 107 each coordinate Zn(2+). Residues isoleucine 175, aspartate 195, arginine 200, 262-264 (LGI), and 286-287 (IY) each bind NAD(+).

The protein belongs to the zinc-containing alcohol dehydrogenase family. Homotetramer. It depends on Zn(2+) as a cofactor.

It localises to the cytoplasm. The enzyme catalyses L-threonine + NAD(+) = (2S)-2-amino-3-oxobutanoate + NADH + H(+). Its pathway is amino-acid degradation; L-threonine degradation via oxydo-reductase pathway; glycine from L-threonine: step 1/2. In terms of biological role, catalyzes the NAD(+)-dependent oxidation of L-threonine to 2-amino-3-ketobutyrate. This is L-threonine 3-dehydrogenase from Shewanella frigidimarina (strain NCIMB 400).